We begin with the raw amino-acid sequence, 218 residues long: N-(5'-phosphoribosyl)anthranilate isomerase (218 aa).

Belongs to the TrpF family.

It catalyses the reaction N-(5-phospho-beta-D-ribosyl)anthranilate = 1-(2-carboxyphenylamino)-1-deoxy-D-ribulose 5-phosphate. It participates in amino-acid biosynthesis; L-tryptophan biosynthesis; L-tryptophan from chorismate: step 3/5. The chain is N-(5'-phosphoribosyl)anthranilate isomerase from Rhodospirillum rubrum (strain ATCC 11170 / ATH 1.1.1 / DSM 467 / LMG 4362 / NCIMB 8255 / S1).